Consider the following 206-residue polypeptide: Large ribosomal subunit protein eL13 (206 aa).

Residues 184–193 (EKTNQKWDGK) show a composition bias toward basic and acidic residues. The interval 184–206 (EKTNQKWDGKRKAKAQAAAEPKA) is disordered.

It belongs to the eukaryotic ribosomal protein eL13 family.

The protein is Large ribosomal subunit protein eL13 (RPL13) of Tetrahymena thermophila (strain SB210).